Reading from the N-terminus, the 695-residue chain is GATA zinc finger domain-containing protein 16 (695 aa).

Disordered stretches follow at residues 82–111, 134–304, and 422–472; these read SPIL…SNNA, VVNS…QQDK, and NNQF…KMRY. Low complexity-rich tracts occupy residues 87–111 and 140–149; these read SQQQ…SNNA and KTTTTNNKPP. Positions 150–174 form a coiled coil; sequence KQSKRKEKERLEEEKQTVAQQQQYQ. Residues 155–165 show a composition bias toward basic and acidic residues; the sequence is KEKERLEEEKQ. A compositionally biased stretch (polar residues) spans 199–209; sequence VSTTPYGNSQF. A compositionally biased stretch (low complexity) spans 210–298; that stretch reads NNNNNNNNNN…NSNSNNNNNN (89 aa). The segment covering 422-433 has biased composition (polar residues); that stretch reads NNQFSGDKQSAL. The span at 434-446 shows a compositional bias: low complexity; that stretch reads NNVKNSKGGNTNN. The GATA-type zinc-finger motif lies at 479–504; sequence CHTCGVTNTPEWRRGPNGAKTLCNAC. Positions 523 to 646 are disordered; that stretch reads NSTGVNITEP…TTNSITTPTT (124 aa). 2 stretches are compositionally biased toward low complexity: residues 544-556 and 564-646; these read DNNN…SDSN and GSNN…TPTT.

The chain is GATA zinc finger domain-containing protein 16 (gtaP) from Dictyostelium discoideum (Social amoeba).